A 170-amino-acid chain; its full sequence is Adenine phosphoribosyltransferase (170 aa).

It belongs to the purine/pyrimidine phosphoribosyltransferase family. As to quaternary structure, homodimer.

It is found in the cytoplasm. It catalyses the reaction AMP + diphosphate = 5-phospho-alpha-D-ribose 1-diphosphate + adenine. It functions in the pathway purine metabolism; AMP biosynthesis via salvage pathway; AMP from adenine: step 1/1. Catalyzes a salvage reaction resulting in the formation of AMP, that is energically less costly than de novo synthesis. This Carboxydothermus hydrogenoformans (strain ATCC BAA-161 / DSM 6008 / Z-2901) protein is Adenine phosphoribosyltransferase.